A 115-amino-acid polypeptide reads, in one-letter code: UPF0125 protein VP0646 (115 aa).

Residues 92–115 are disordered; the sequence is RAEQAKAAGNADPVTGGKPNALRK.

It belongs to the UPF0125 (RnfH) family.

This Vibrio parahaemolyticus serotype O3:K6 (strain RIMD 2210633) protein is UPF0125 protein VP0646.